Consider the following 217-residue polypeptide: MFGKNAKVDLELNRDVEQLIKTGGKEKLLPIVQAGEPVLRQRTVAYNGQLSKRTLAKLIDTMHTTMLEAPGVGLAATQIGLGLALAVVEDHVRDDEDDPREIAEFPFHVIINPSYKPTSDKTASFYEGCLSFDGYQAVRKRWLDITAEWDDEDGKHHSEPLHGWPARIFQHETDHLSGELYIDRAEIRSLTTNENLEDYWCEDPVPTEAAEELGFAL.

2 residues coordinate Fe cation: Cys129 and His171. Residue Glu172 is part of the active site. His175 serves as a coordination point for Fe cation.

The protein belongs to the polypeptide deformylase family. Requires Fe(2+) as cofactor.

The catalysed reaction is N-terminal N-formyl-L-methionyl-[peptide] + H2O = N-terminal L-methionyl-[peptide] + formate. Functionally, removes the formyl group from the N-terminal Met of newly synthesized proteins. Requires at least a dipeptide for an efficient rate of reaction. N-terminal L-methionine is a prerequisite for activity but the enzyme has broad specificity at other positions. This chain is Peptide deformylase 1, found in Bifidobacterium longum (strain NCC 2705).